A 114-amino-acid chain; its full sequence is Transcription initiation factor IIB (114 aa).

2 tandem repeats follow at residues 1–17 and 28–109.

Belongs to the TFIIB family.

Stabilizes TBP binding to an archaeal box-A promoter. Also responsible for recruiting RNA polymerase II to the pre-initiation complex (DNA-TBP-TFIIB). This chain is Transcription initiation factor IIB (tfb), found in Haloarcula vallismortis (Halobacterium vallismortis).